A 529-amino-acid chain; its full sequence is Transcription activator of gluconeogenesis ERT1 (529 aa).

The interval 1–31 (MCTPDENDYKTSTDPDTSANTNHTLEKKKRK) is disordered. Residues 14 to 23 (DPDTSANTNH) show a composition bias toward polar residues. The zn(2)-C6 fungal-type DNA-binding region spans 40–68 (CVNCSRLHVSCEAKRPCLRCISKGLTATC). Over residues 174 to 193 (SNSTIGNSSNNSPTGTNTSP) the composition is skewed to low complexity. Residues 174 to 198 (SNSTIGNSSNNSPTGTNTSPEETEM) are disordered. The PAS domain maps to 408–480 (TLLEYVKFIA…KTLSKVAYRD (73 aa)).

Belongs to the ERT1/acuK family.

It localises to the cytoplasm. The protein resides in the nucleus. Functionally, transcription factor which regulates nonfermentable carbon utilization. Activator of gluconeogenetic genes like PCK1. Involved in restriction of Ty1 transposition. This chain is Transcription activator of gluconeogenesis ERT1 (ERT1), found in Saccharomyces cerevisiae (strain ATCC 204508 / S288c) (Baker's yeast).